Consider the following 267-residue polypeptide: Cell division protein FtsQ (267 aa).

Residues 1–32 (MRKKTSSNKKNTAKKNNNISLHRKLGLIYKKT) lie on the Cytoplasmic side of the membrane. The chain crosses the membrane as a helical span at residues 33-53 (ILILKIVLIIFICLFAFTKYF). Topologically, residues 54–267 (ASLKSYLKTN…DKNKYYIEKY (214 aa)) are periplasmic. One can recognise a POTRA domain in the interval 73-141 (FKLENVIIEG…STIYIKLFER (69 aa)).

Belongs to the FtsQ/DivIB family. FtsQ subfamily.

Its subcellular location is the cell inner membrane. Functionally, essential cell division protein. This Rickettsia bellii (strain RML369-C) protein is Cell division protein FtsQ.